A 75-amino-acid polypeptide reads, in one-letter code: Meucin-49 (75 aa).

The first 22 residues, 1 to 22, serve as a signal peptide directing secretion; that stretch reads MNKKILLVIFIVTMLIVDEVNS.

It belongs to the non-disulfide-bridged peptide (NDBP) superfamily. Long chain multifunctional peptide (group 2) family. As to expression, expressed by the venom gland.

The protein localises to the secreted. Its function is as follows. Insecticidal toxin and antimicrobial peptide with potent activity against both Gram-negative and -positive bacteria, as well as against fungi. Acts by disrupting bacterial membrane integrity. Shows broad-spectrum and highly potent bactericidal activities against the Gram-positive bacteria B.cereus, B.megaterium, B.subtilis, M.luteus, S.aureus, S.epidermidis, S.warneri, S.griseus, S.scabiei, S.mutans, S.salivarius, and S.sanguinis. Also exhibits a wide spectrum of activity against the Gram-negative bacteria A.faecalis, E.coli, P.aeruginosa, P.solanacearum, S.enterica, S.marcescens, and S.maltophilia. Also shows antimicrobial activities against the fungal strains Aspergillus flavus, A.fumigatus, A.nidulans, A.niger, Beauveria bassiana, and Saccharomyces cerevisiae. Its antibiotic activity is potentiated by other antibacterial peptides such as MeuNaTxbeta-4. Also induces cytolysis on mice, lizards and birds erythrocytes. The chain is Meucin-49 from Mesobuthus eupeus (Lesser Asian scorpion).